The chain runs to 345 residues: Phosphate acyltransferase (345 aa).

It belongs to the PlsX family. As to quaternary structure, homodimer. Probably interacts with PlsY.

It localises to the cytoplasm. The enzyme catalyses a fatty acyl-[ACP] + phosphate = an acyl phosphate + holo-[ACP]. It functions in the pathway lipid metabolism; phospholipid metabolism. Its function is as follows. Catalyzes the reversible formation of acyl-phosphate (acyl-PO(4)) from acyl-[acyl-carrier-protein] (acyl-ACP). This enzyme utilizes acyl-ACP as fatty acyl donor, but not acyl-CoA. This is Phosphate acyltransferase from Nitratidesulfovibrio vulgaris (strain ATCC 29579 / DSM 644 / CCUG 34227 / NCIMB 8303 / VKM B-1760 / Hildenborough) (Desulfovibrio vulgaris).